We begin with the raw amino-acid sequence, 880 residues long: Alanine--tRNA ligase (880 aa).

Zn(2+) is bound by residues H566, H570, C668, and H672.

This sequence belongs to the class-II aminoacyl-tRNA synthetase family. Requires Zn(2+) as cofactor.

Its subcellular location is the cytoplasm. It catalyses the reaction tRNA(Ala) + L-alanine + ATP = L-alanyl-tRNA(Ala) + AMP + diphosphate. Its function is as follows. Catalyzes the attachment of alanine to tRNA(Ala) in a two-step reaction: alanine is first activated by ATP to form Ala-AMP and then transferred to the acceptor end of tRNA(Ala). Also edits incorrectly charged Ser-tRNA(Ala) and Gly-tRNA(Ala) via its editing domain. This Acetivibrio thermocellus (strain ATCC 27405 / DSM 1237 / JCM 9322 / NBRC 103400 / NCIMB 10682 / NRRL B-4536 / VPI 7372) (Clostridium thermocellum) protein is Alanine--tRNA ligase.